Reading from the N-terminus, the 339-residue chain is Fructose-1,6-bisphosphatase class 1 (339 aa).

4 residues coordinate Mg(2+): E94, D116, L118, and D119. Substrate contacts are provided by residues 119–122, N210, and K276; that span reads DGSS. E282 contacts Mg(2+).

The protein belongs to the FBPase class 1 family. Homotetramer. Requires Mg(2+) as cofactor.

The protein resides in the cytoplasm. The catalysed reaction is beta-D-fructose 1,6-bisphosphate + H2O = beta-D-fructose 6-phosphate + phosphate. The protein operates within carbohydrate biosynthesis; gluconeogenesis. This Burkholderia ambifaria (strain MC40-6) protein is Fructose-1,6-bisphosphatase class 1.